A 526-amino-acid chain; its full sequence is Bifunctional purine biosynthesis protein PurH (526 aa).

The region spanning 1–145 (MIRTALLSVS…KNHQDVTVLI (145 aa)) is the MGS-like domain.

The protein belongs to the PurH family.

The enzyme catalyses (6R)-10-formyltetrahydrofolate + 5-amino-1-(5-phospho-beta-D-ribosyl)imidazole-4-carboxamide = 5-formamido-1-(5-phospho-D-ribosyl)imidazole-4-carboxamide + (6S)-5,6,7,8-tetrahydrofolate. It carries out the reaction IMP + H2O = 5-formamido-1-(5-phospho-D-ribosyl)imidazole-4-carboxamide. The protein operates within purine metabolism; IMP biosynthesis via de novo pathway; 5-formamido-1-(5-phospho-D-ribosyl)imidazole-4-carboxamide from 5-amino-1-(5-phospho-D-ribosyl)imidazole-4-carboxamide (10-formyl THF route): step 1/1. It functions in the pathway purine metabolism; IMP biosynthesis via de novo pathway; IMP from 5-formamido-1-(5-phospho-D-ribosyl)imidazole-4-carboxamide: step 1/1. The sequence is that of Bifunctional purine biosynthesis protein PurH from Polynucleobacter asymbioticus (strain DSM 18221 / CIP 109841 / QLW-P1DMWA-1) (Polynucleobacter necessarius subsp. asymbioticus).